A 108-amino-acid chain; its full sequence is Small ribosomal subunit protein uS10 (108 aa).

Belongs to the universal ribosomal protein uS10 family. Part of the 30S ribosomal subunit.

Functionally, involved in the binding of tRNA to the ribosomes. This is Small ribosomal subunit protein uS10 from Ehrlichia canis (strain Jake).